Here is an 84-residue protein sequence, read N- to C-terminus: Cytochrome c oxidase subunit 12, mitochondrial (84 aa).

The CHCH domain maps to 27–70 (TKHCWQNYVDYHKCILAKGEDFAPCRQFWLAYRSLCPSGWYQRW). A Cx9C motif motif is present at residues 30–40 (CWQNYVDYHKC). 2 disulfides stabilise this stretch: C30/C62 and C40/C51. The Cx10C motif motif lies at 51 to 62 (CRQFWLAYRSLC).

This sequence belongs to the cytochrome c oxidase subunit 6B family. Component of the cytochrome c oxidase (complex IV, CIV), a multisubunit enzyme composed of 11 subunits. The complex is composed of a catalytic core of 3 subunits Cox1, Cox2 and Cox3, encoded in the mitochondrial DNA, and 8 supernumerary subunits Cox4, Cox5a/Cox5, Cox6, Cox7, Cox8, Cox7a/Cox9, Cox6b/Cox12 and Cox6a/Cox13, which are encoded in the nuclear genome. The complex exists as a monomer or a dimer and forms respiratory supercomplexes (SCs) in the inner mitochondrial membrane with NADH-ubiquinone oxidoreductase (complex I, CI) and ubiquinol-cytochrome c oxidoreductase (cytochrome b-c1 complex, complex III, CIII), resulting in various different assemblies (supercomplexes I(1)IV(1), I(1)III(3)IV(2), III(2)IV(1) and III(2)IV(2) as well as larger supercomplexes of compositions like I(1)III(2)IV(5-6)).

The protein localises to the mitochondrion inner membrane. Its pathway is energy metabolism; oxidative phosphorylation. Component of the cytochrome c oxidase, the last enzyme in the mitochondrial electron transport chain which drives oxidative phosphorylation. The respiratory chain contains 3 multisubunit complexes succinate dehydrogenase (complex II, CII), ubiquinol-cytochrome c oxidoreductase (cytochrome b-c1 complex, complex III, CIII) and cytochrome c oxidase (complex IV, CIV), that cooperate to transfer electrons derived from NADH and succinate to molecular oxygen, creating an electrochemical gradient over the inner membrane that drives transmembrane transport and the ATP synthase. Cytochrome c oxidase is the component of the respiratory chain that catalyzes the reduction of oxygen to water. Electrons originating from reduced cytochrome c in the intermembrane space (IMS) are transferred via the dinuclear copper A center (CU(A)) of Cox2 and heme A of Cox1 to the active site in Cox1, a binuclear center (BNC) formed by heme A3 and copper B (CU(B)). The BNC reduces molecular oxygen to 2 water molecules using 4 electrons from cytochrome c in the IMS and 4 protons from the mitochondrial matrix. The polypeptide is Cytochrome c oxidase subunit 12, mitochondrial (cox-13) (Neurospora crassa (strain ATCC 24698 / 74-OR23-1A / CBS 708.71 / DSM 1257 / FGSC 987)).